Here is a 129-residue protein sequence, read N- to C-terminus: UPF0344 protein USA300HOU_0928 (129 aa).

4 consecutive transmembrane segments (helical) span residues 1–21 (MLHL…ATYL), 36–56 (LHMI…WILI), 67–87 (MLLT…EVSI), and 99–119 (MFWI…ILPL).

It belongs to the UPF0344 family.

It localises to the cell membrane. This Staphylococcus aureus (strain USA300 / TCH1516) protein is UPF0344 protein USA300HOU_0928.